Consider the following 247-residue polypeptide: Chaperone protein NfaE (247 aa).

An N-terminal signal peptide occupies residues 1–29 (MKMRAVAVFTGMLTGVLSVTGLLSAGAYA). The interval 106 to 125 (GQQSSRRRSVSTGGEFPSDR) is disordered.

Belongs to the periplasmic pilus chaperone family.

Its subcellular location is the periplasm. Involved in the biogenesis of the NFA-I adhesin. This Escherichia coli protein is Chaperone protein NfaE (nfaE).